The following is a 206-amino-acid chain: SOSS complex subunit B2 (206 aa).

The OB DNA-binding region spans 26-89; that stretch reads IVLEIGRVTK…SMWKGCLTLY (64 aa). Disordered regions lie at residues 114–146 and 166–206; these read EPNP…GTGT and SYAG…AFKR. A compositionally biased stretch (polar residues) spans 181-196; the sequence is LPGTANNQTVMTTISN.

It belongs to the SOSS-B family. SOSS-B2 subfamily. As to quaternary structure, component of the SOSS complex, composed of SOSS-B (SOSS-B1/NABP2 or SOSS-B2/NABP1), SOSS-A/INTS3 and SOSS-C/INIP. SOSS complexes containing SOSS-B1/NABP2 are more abundant than complexes containing SOSS-B2/NABP1.

Its subcellular location is the nucleus. In terms of biological role, component of the SOSS complex, a multiprotein complex that functions downstream of the MRN complex to promote DNA repair and G2/M checkpoint. In the SOSS complex, acts as a sensor of single-stranded DNA that binds to single-stranded DNA, in particular to polypyrimidines. The SOSS complex associates with DNA lesions and influences diverse endpoints in the cellular DNA damage response including cell-cycle checkpoint activation, recombinational repair and maintenance of genomic stability. Required for efficient homologous recombination-dependent repair of double-strand breaks (DSBs) and ATM-dependent signaling pathways. In Bos taurus (Bovine), this protein is SOSS complex subunit B2 (NABP1).